Consider the following 151-residue polypeptide: MRHYEIVFLVHPDQSEQVPGMIERYTSAVKDSGGSVHRLEDWGRRQMAYSINKIHKAHYVLMNIECGDQALEELTTNFRYNDAILRNMVIRCDEAVTEESPIQKAEKENRERKNRAERRAAEAAAATETEKSESEESAEEETSTDTTGEEE.

The disordered stretch occupies residues 98–151 (EESPIQKAEKENRERKNRAERRAAEAAAATETEKSESEESAEEETSTDTTGEEE). Residues 135 to 151 (EESAEEETSTDTTGEEE) show a composition bias toward acidic residues.

The protein belongs to the bacterial ribosomal protein bS6 family.

Its function is as follows. Binds together with bS18 to 16S ribosomal RNA. This chain is Small ribosomal subunit protein bS6, found in Teredinibacter turnerae (strain ATCC 39867 / T7901).